A 1353-amino-acid polypeptide reads, in one-letter code: Protein timeless homolog (1353 aa).

Disordered regions lie at residues 798 to 825, 1150 to 1291, and 1306 to 1335; these read VAEDRAEDPDEEDPAEPYDSEQEEEEEV, KPTR…LEED, and GGSIAGNGITETRRDTSEEREDDDDEDPFT. Residues 802–825 are compositionally biased toward acidic residues; the sequence is RAEDPDEEDPAEPYDSEQEEEEEV. Composition is skewed to basic and acidic residues over residues 1150–1160 and 1168–1182; these read KPTRQVERHLE and ERSKKSEKNGKKFDD. Composition is skewed to acidic residues over residues 1183 to 1206 and 1217 to 1226; these read FLNDDDDDSENDVGGGSEDDEEEE and DSEDEEEHIE. Positions 1227-1239 are enriched in basic and acidic residues; the sequence is QEEAQKKLEKVAE. Composition is skewed to acidic residues over residues 1261–1273, 1282–1291, and 1323–1332; these read DSSDESDDDDSAE, AEDDSDLEED, and EEREDDDDED.

Belongs to the timeless family. Associates with the cohesin complex. Interacts with smc-1, smc-3, scc-1 and scc-3.

The protein localises to the nucleus. Plays an important role in chromosome cohesion during both mitosis and meiosis. In prophase of meiosis, it is involved in the formation of the synaptonemal complex (SC) and specifically, in the diplotene and diakinesis phases of prophase, it stabilizes the association of homologous chromosomes during synapsis and sister chromatid cohesion. It regulates cohesin subunits to promote meiotic chromosome cohesion and localizes non-SMC (structural maintenance of chromosome) cohesin subunits to chromatin prior to or during pre-meiotic S phase. Implicated in influencing either the stability or loading of meiotic-specific cohesin subunit, rec8. Controls cell cycle exit and cell fusion to prevent the premature differentiation into adult cells. Specifically, regulates hypodermal seam cell identity. The protein is Protein timeless homolog of Caenorhabditis elegans.